The sequence spans 108 residues: ATP synthase subunit H, mitochondrial (108 aa).

A mitochondrion-targeting transit peptide spans 1–19 (MFTLRAASRRAFSTSIARR). 2 disordered regions span residues 40-60 (AKDAEGQVKPWSAPSAPKPPV) and 75-108 (APVDVEGQTNSKSASPQANDEDWLAFEEEEGVAV). The span at 47–60 (VKPWSAPSAPKPPV) shows a compositional bias: low complexity. The segment covering 81 to 92 (GQTNSKSASPQA) has biased composition (polar residues). Over residues 93–108 (NDEDWLAFEEEEGVAV) the composition is skewed to acidic residues.

F-type ATP synthases have 2 components, the catalytic core F(1) and the membrane-embedded component F(0), linked together by a central stalk and a peripheral stalk. The central stalk, also called rotor shaft, is often seen as part of F(1). The peripheral stalk is seen as part of F(0). F(0) contains the membrane channel next to the rotor. F-type ATP synthases form dimers but each monomer functions independently in ATP generation. The dimer consists of 17 different polypeptides: ATP1 (subunit alpha, 3 molecules per monomer, part of F(1)), ATP2 (subunit beta, 3 copies per monomer, part of F(1)), ATP3 (subunit gamma, part of the central stalk), ATP4 (subunit b, part of the peripheral stalk), ATP5/OSCP (subunit 5/OSCP, part of the peripheral stalk), ATP6 (subunit a, part of the peripheral stalk), ATP7 (subunit d, part of the peripheral stalk), ATP8 (subunit 8, part of the peripheral stalk), OLI1 (subunit c, part of the rotor, 10 molecules per monomer), ATP14 (subunit H, part of the peripheral stalk), ATP15 (subunit epsilon, part of the central stalk), ATP16 (subunit delta, part of the central stalk), ATP17 (subunit f, part of the peripheral stalk), ATP18 (subunit i/j, part of the peripheral stalk), ATP19 (subunit k, dimer-specific, at interface between monomers), ATP20 (subunit g, at interface between monomers), TIM11 (subunit e, at interface between monomers).

The protein localises to the mitochondrion inner membrane. In terms of biological role, mitochondrial membrane ATP synthase (F(1)F(0) ATP synthase or Complex V) produces ATP from ADP in the presence of a proton gradient across the membrane which is generated by electron transport complexes of the respiratory chain. F-type ATP synthases consist of two structural domains, F(1) - containing the extramembraneous catalytic core, and F(0) - containing the membrane proton channel, linked together by a central stalk and a peripheral stalk. During catalysis, ATP synthesis in the catalytic domain of F(1) is coupled via a rotary mechanism of the central stalk subunits to proton translocation. Part of the peripheral stalk. This is ATP synthase subunit H, mitochondrial from Yarrowia lipolytica (strain CLIB 122 / E 150) (Yeast).